The following is a 118-amino-acid chain: Large ribosomal subunit protein uL18 (118 aa).

The interval 1 to 24 (MISKPDKNKIRQKRHRRVRGKLSG) is disordered. Residues 10–20 (IRQKRHRRVRG) show a composition bias toward basic residues.

Belongs to the universal ribosomal protein uL18 family. In terms of assembly, part of the 50S ribosomal subunit; part of the 5S rRNA/L5/L18/L25 subcomplex. Contacts the 5S and 23S rRNAs.

Functionally, this is one of the proteins that bind and probably mediate the attachment of the 5S RNA into the large ribosomal subunit, where it forms part of the central protuberance. The chain is Large ribosomal subunit protein uL18 from Streptococcus agalactiae serotype III (strain NEM316).